Reading from the N-terminus, the 542-residue chain is Chaperonin GroEL (542 aa).

Residues 29–32 (TLGP), Lys50, 86–90 (DGTTT), Gly414, and Asp494 contribute to the ATP site.

This sequence belongs to the chaperonin (HSP60) family. Forms a cylinder of 14 subunits composed of two heptameric rings stacked back-to-back. Interacts with the co-chaperonin GroES.

It localises to the cytoplasm. The catalysed reaction is ATP + H2O + a folded polypeptide = ADP + phosphate + an unfolded polypeptide.. Its function is as follows. Together with its co-chaperonin GroES, plays an essential role in assisting protein folding. The GroEL-GroES system forms a nano-cage that allows encapsulation of the non-native substrate proteins and provides a physical environment optimized to promote and accelerate protein folding. This is Chaperonin GroEL from Cytophaga hutchinsonii (strain ATCC 33406 / DSM 1761 / CIP 103989 / NBRC 15051 / NCIMB 9469 / D465).